The chain runs to 121 residues: Large ribosomal subunit protein uL18 (121 aa).

Belongs to the universal ribosomal protein uL18 family. Part of the 50S ribosomal subunit; part of the 5S rRNA/L5/L18/L25 subcomplex. Contacts the 5S and 23S rRNAs.

In terms of biological role, this is one of the proteins that bind and probably mediate the attachment of the 5S RNA into the large ribosomal subunit, where it forms part of the central protuberance. The sequence is that of Large ribosomal subunit protein uL18 from Ehrlichia chaffeensis (strain ATCC CRL-10679 / Arkansas).